Reading from the N-terminus, the 440-residue chain is MSEFSQTVPELVAWARKNDFSISLPVDRLSFLLAVATLNGERLDGEMSEGELVDAFRHVSDAFEQTSETIGVRANNAINDMVRQRLLNRFTSEQAEGNAIYRLTPLGIGITDYYIRQREFSTLRLSMQLSIVAGELKRAADAAEEGGDEFHWHRNVYAPLKYSVAEIFDSIDLTQRLMDEQQQQVKDDIAQLLNKDWRAAISSCELLLSETSGTLRELQDTLEAAGDKLQANLLRIQDATMTHDDLHFVDRLVFDLQSKLDRIISWGQQSIDLWIGYDRHVHKFIRTAIDMDKNRVFAQRLRQSVQTYFDEPWALTYANADRLLDMRDEEMALRDEEVTGELPEDLEYEEFNEIREQLAAIIEEQLAVYKTRQVPLDLGLVVREYLSQYPRARHFDVARIVIDQAVRLGVAQADFTGLPAKWQPINDYGAKVQAHVIDKY.

The segment at 208–236 (LSETSGTLRELQDTLEAAGDKLQANLLRI) is leucine-zipper.

Belongs to the MukF family. As to quaternary structure, interacts, and probably forms a ternary complex, with MukE and MukB via its C-terminal region. The complex formation is stimulated by calcium or magnesium. It is required for an interaction between MukE and MukB.

The protein localises to the cytoplasm. Its subcellular location is the nucleoid. Functionally, involved in chromosome condensation, segregation and cell cycle progression. May participate in facilitating chromosome segregation by condensation DNA from both sides of a centrally located replisome during cell division. Not required for mini-F plasmid partitioning. Probably acts via its interaction with MukB and MukE. Overexpression results in anucleate cells. It has a calcium binding activity. In Escherichia coli O17:K52:H18 (strain UMN026 / ExPEC), this protein is Chromosome partition protein MukF.